Consider the following 254-residue polypeptide: uncharacterized protein (254 aa).

This is an uncharacterized protein from Acidianus filamentous virus 2 (isolate Italy/Pozzuoli) (AFV-2).